Consider the following 700-residue polypeptide: Acyl-coenzyme A oxidase 2 (700 aa).

The protein belongs to the acyl-CoA oxidase family. In terms of assembly, heteropentamer composed of five different subunits. The cofactor is FAD.

The protein resides in the peroxisome. The enzyme catalyses a 2,3-saturated acyl-CoA + O2 = a (2E)-enoyl-CoA + H2O2. Its pathway is lipid metabolism; peroxisomal fatty acid beta-oxidation. Its function is as follows. Oxidizes strain chain acyl-CoAs with a chain length of 10 to 14 carbons. Also active toward the 2S isomers of acyl-CoA-esters containing a 2-methyl group. The protein is Acyl-coenzyme A oxidase 2 (POX2) of Yarrowia lipolytica (strain CLIB 122 / E 150) (Yeast).